The primary structure comprises 480 residues: Chromosomal replication initiator protein DnaA (480 aa).

A domain I, interacts with DnaA modulators region spans residues 1-71 (MNLTKVWNTT…REQLGSVVGF (71 aa)). Residues 71-139 (FPVDVRIVLA…LELHRAVRSS (69 aa)) are domain II. The segment at 91 to 115 (SINGRHAARDTRKSDHHAPLSGGYG) is disordered. The segment covering 97-108 (AARDTRKSDHHA) has biased composition (basic and acidic residues). The segment at 140–356 (MLNPRYTFDR…GCLNRVTAYA (217 aa)) is domain III, AAA+ region. Positions 184, 186, 187, and 188 each coordinate ATP. Residues 357-480 (QMYNIPVTIE…IRERLMNSAV (124 aa)) are domain IV, binds dsDNA.

Belongs to the DnaA family. Oligomerizes as a right-handed, spiral filament on DNA at oriC.

The protein resides in the cytoplasm. Its function is as follows. Plays an essential role in the initiation and regulation of chromosomal replication. ATP-DnaA binds to the origin of replication (oriC) to initiate formation of the DNA replication initiation complex once per cell cycle. Binds the DnaA box (a 9 base pair repeat at the origin) and separates the double-stranded (ds)DNA. Forms a right-handed helical filament on oriC DNA; dsDNA binds to the exterior of the filament while single-stranded (ss)DNA is stabiized in the filament's interior. The ATP-DnaA-oriC complex binds and stabilizes one strand of the AT-rich DNA unwinding element (DUE), permitting loading of DNA polymerase. After initiation quickly degrades to an ADP-DnaA complex that is not apt for DNA replication. Binds acidic phospholipids. The sequence is that of Chromosomal replication initiator protein DnaA from Roseiflexus castenholzii (strain DSM 13941 / HLO8).